Here is a 413-residue protein sequence, read N- to C-terminus: cAMP-dependent protein kinase regulatory subunit (413 aa).

The tract at residues 1 to 145 (MADSSSFPGT…DSWTPPCHPK (145 aa)) is disordered. A dimerization and phosphorylation region spans residues 24–161 (SPIQKISEEE…RLKTAVSNNF (138 aa)). Over residues 58–67 (GNSFNGDNGS) the composition is skewed to low complexity. The segment covering 121–138 (TSVSAESLNPTSAGSDSW) has biased composition (polar residues). At serine 122 the chain carries Phosphoserine. Residues 162 to 291 (LFSH…FLEE), glutamate 240, arginine 249, 294 to 413 (LLSS…PSPS), glutamate 361, and arginine 370 each bind 3',5'-cyclic AMP.

It belongs to the cAMP-dependent kinase regulatory chain family. Tetramer, composed of 2 regulatory (R) and 2 catalytic (C) subunits. In the presence of cAMP it dissociates into 2 active monomeric C subunits and an R dimer.

This Aspergillus fumigatus (strain ATCC MYA-4609 / CBS 101355 / FGSC A1100 / Af293) (Neosartorya fumigata) protein is cAMP-dependent protein kinase regulatory subunit (pkaR).